Reading from the N-terminus, the 297-residue chain is Glycine--tRNA ligase alpha subunit (297 aa).

Belongs to the class-II aminoacyl-tRNA synthetase family. As to quaternary structure, tetramer of two alpha and two beta subunits.

The protein localises to the cytoplasm. It carries out the reaction tRNA(Gly) + glycine + ATP = glycyl-tRNA(Gly) + AMP + diphosphate. This chain is Glycine--tRNA ligase alpha subunit (glyQ), found in Halalkalibacterium halodurans (strain ATCC BAA-125 / DSM 18197 / FERM 7344 / JCM 9153 / C-125) (Bacillus halodurans).